The following is a 237-amino-acid chain: H/ACA ribonucleoprotein complex subunit 1 (237 aa).

2 stretches are compositionally biased toward gly residues: residues 1 to 59 (MGFG…GGRG) and 172 to 237 (RGGG…RGRW). Disordered regions lie at residues 1–64 (MGFG…FDTG) and 157–237 (KPPQ…RGRW). RGG-box regions lie at residues 4–56 (GKPR…GRGG) and 166–236 (KAFT…GRGR).

This sequence belongs to the GAR1 family. As to quaternary structure, component of the box H/ACA small nucleolar ribonucleoprotein (H/ACA snoRNP) complex consisting of Nop60B, Gar1, NPH2 and Nop10, and associated with H/ACA-type snoRNAs.

It localises to the nucleus. It is found in the nucleolus. Functionally, component of the box H/ACA small nucleolar ribonucleoprotein (H/ACA snoRNP) complex, which catalyzes pseudouridylation of rRNA. This involves the isomerization of uridine such that the ribose is subsequently attached to C5, instead of the normal N1. Pseudouridine ('psi') residues may serve to stabilize the conformation of rRNAs. Required for ribosome biogenesis. H/ACA snoRNP complex-dependent ribosome biogenesis is important in female germline cell differentiation during oogenesis. The protein is H/ACA ribonucleoprotein complex subunit 1 of Drosophila melanogaster (Fruit fly).